Reading from the N-terminus, the 164-residue chain is uncharacterized protein (164 aa).

Residues Phe-46–Tyr-66 traverse the membrane as a helical segment. The stretch at Lys-72–Glu-137 forms a coiled coil. Positions Glu-76 to Thr-91 are enriched in basic and acidic residues. The interval Glu-76–Lys-114 is disordered.

Its subcellular location is the membrane. This is an uncharacterized protein from Acanthamoeba polyphaga mimivirus (APMV).